A 134-amino-acid chain; its full sequence is Flagellar basal-body rod protein FlgC (134 aa).

This sequence belongs to the flagella basal body rod proteins family. As to quaternary structure, the basal body constitutes a major portion of the flagellar organelle and consists of four rings (L,P,S, and M) mounted on a central rod. The rod consists of about 26 subunits of FlgG in the distal portion, and FlgB, FlgC and FlgF are thought to build up the proximal portion of the rod with about 6 subunits each.

It localises to the bacterial flagellum basal body. The chain is Flagellar basal-body rod protein FlgC (flgC) from Escherichia coli O157:H7.